The following is a 205-amino-acid chain: Phosphoserine phosphatase ThrH (205 aa).

Asp-7 (nucleophile) is an active-site residue. Asp-7 and Glu-9 together coordinate Mg(2+). The active-site Proton donor is the Glu-9. Substrate-binding positions include Glu-15, Arg-46, 90–91 (SD), and Lys-133. Asp-152 is a Mg(2+) binding site. Asn-155 is a substrate binding site.

Belongs to the thrH family. Mg(2+) serves as cofactor.

The enzyme catalyses O-phospho-L-serine + H2O = L-serine + phosphate. It catalyses the reaction O-phospho-D-serine + H2O = D-serine + phosphate. Its pathway is amino-acid biosynthesis; L-serine biosynthesis; L-serine from 3-phospho-D-glycerate: step 3/3. Phosphoserine phosphatase that mediates dephosphorylation of phosphoserine in the serine biosynthesis pathway. Also able to dephosphorylate other substrates such as phospho-L(or D)-threonine, with lower activity. Shows phosphoserine:homoserine phosphotransferase activity by transferring the phosphoryl group to homoserine using phosphoserine as the phosphoryl group donor. This chain is Phosphoserine phosphatase ThrH (thrH), found in Pseudomonas aeruginosa (strain ATCC 15692 / DSM 22644 / CIP 104116 / JCM 14847 / LMG 12228 / 1C / PRS 101 / PAO1).